Consider the following 186-residue polypeptide: MALNLKINRQIRAPKVRLIGSSGEQLGILNTKDALDLAREADLDLVEVASNSEPPVCKIMDYGKYRYDLTKKEKDSKKAQHQVRIKEVKLKPNIDEGDFSTKLKQARAFIEKGNKVKITCMFRGRELAYPEHGHRVVQKMSQGLEDIGFMESEPKLNGRSLICVMAPGTVKTKKKQDKINAQDEKQ.

Belongs to the IF-3 family. Monomer.

It is found in the cytoplasm. Its function is as follows. IF-3 binds to the 30S ribosomal subunit and shifts the equilibrium between 70S ribosomes and their 50S and 30S subunits in favor of the free subunits, thus enhancing the availability of 30S subunits on which protein synthesis initiation begins. The polypeptide is Translation initiation factor IF-3 (Chlamydia caviae (strain ATCC VR-813 / DSM 19441 / 03DC25 / GPIC) (Chlamydophila caviae)).